The sequence spans 194 residues: Glycerol-3-phosphate acyltransferase (194 aa).

Transmembrane regions (helical) follow at residues 7-27, 59-79, 86-106, 116-136, and 157-177; these read LLMA…YWVC, LTLF…AMLG, GVTA…HFKG, AGLA…AAVV, and AWRL…FILI.

The protein belongs to the PlsY family. In terms of assembly, probably interacts with PlsX.

It is found in the cell inner membrane. It carries out the reaction an acyl phosphate + sn-glycerol 3-phosphate = a 1-acyl-sn-glycero-3-phosphate + phosphate. It functions in the pathway lipid metabolism; phospholipid metabolism. Catalyzes the transfer of an acyl group from acyl-phosphate (acyl-PO(4)) to glycerol-3-phosphate (G3P) to form lysophosphatidic acid (LPA). This enzyme utilizes acyl-phosphate as fatty acyl donor, but not acyl-CoA or acyl-ACP. The sequence is that of Glycerol-3-phosphate acyltransferase from Hahella chejuensis (strain KCTC 2396).